The chain runs to 226 residues: UPF0173 metal-dependent hydrolase CTN_1413 (226 aa).

Belongs to the UPF0173 family.

The sequence is that of UPF0173 metal-dependent hydrolase CTN_1413 from Thermotoga neapolitana (strain ATCC 49049 / DSM 4359 / NBRC 107923 / NS-E).